Here is a 263-residue protein sequence, read N- to C-terminus: 4-hydroxy-2-oxo-heptane-1,7-dioate aldolase (263 aa).

Residue His-45 is the Proton acceptor of the active site. Gln-147 is a binding site for substrate. Glu-149 serves as a coordination point for a divalent metal cation. Ala-174 and Asp-175 together coordinate substrate. Asp-175 lines the a divalent metal cation pocket.

It belongs to the HpcH/HpaI aldolase family. In terms of assembly, homohexamer; trimer of dimers. A divalent metal cation serves as cofactor.

It catalyses the reaction 4-hydroxy-2-oxoheptanedioate = succinate semialdehyde + pyruvate. It participates in aromatic compound metabolism; 4-hydroxyphenylacetate degradation; pyruvate and succinate semialdehyde from 4-hydroxyphenylacetate: step 7/7. In terms of biological role, catalyzes the reversible retro-aldol cleavage of 4-hydroxy-2-ketoheptane-1,7-dioate (HKHD) to pyruvate and succinic semialdehyde. In Salmonella paratyphi A (strain ATCC 9150 / SARB42), this protein is 4-hydroxy-2-oxo-heptane-1,7-dioate aldolase.